The sequence spans 147 residues: MTTTIYILNGPNLNLLGQRQPEIYGHETLADVERRCAEVAAEKGFSVRLFQSNHEGTIIDQIHEARQAACGIVINPAAYTHTSVAILDALHAFEGPVIECHISNVHKRESFRHHSYVSLRADGVLAGFGIEGYELAVRRICSLCAGG.

The active-site Proton acceptor is the Tyr24. Residues Asn75, His81, and Asp88 each contribute to the substrate site. His101 serves as the catalytic Proton donor. Residues 102 to 103 (IS) and Arg112 each bind substrate.

Belongs to the type-II 3-dehydroquinase family. Homododecamer.

It carries out the reaction 3-dehydroquinate = 3-dehydroshikimate + H2O. It functions in the pathway metabolic intermediate biosynthesis; chorismate biosynthesis; chorismate from D-erythrose 4-phosphate and phosphoenolpyruvate: step 3/7. Functionally, catalyzes a trans-dehydration via an enolate intermediate. This is 3-dehydroquinate dehydratase from Cereibacter sphaeroides (strain ATCC 17029 / ATH 2.4.9) (Rhodobacter sphaeroides).